Consider the following 60-residue polypeptide: Protein translocase subunit SecE (60 aa).

A helical membrane pass occupies residues 37–57; it reads LLGFALVGGIGYLIHLGYIIL.

Belongs to the SecE/SEC61-gamma family. As to quaternary structure, component of the Sec protein translocase complex. Heterotrimer consisting of SecY (alpha), SecG (beta) and SecE (gamma) subunits. The heterotrimers can form oligomers, although 1 heterotrimer is thought to be able to translocate proteins. Interacts with the ribosome. May interact with SecDF, and other proteins may be involved.

It localises to the cell membrane. Functionally, essential subunit of the Sec protein translocation channel SecYEG. Clamps together the 2 halves of SecY. May contact the channel plug during translocation. The chain is Protein translocase subunit SecE from Aeropyrum pernix (strain ATCC 700893 / DSM 11879 / JCM 9820 / NBRC 100138 / K1).